The following is a 230-amino-acid chain: 7-cyano-7-deazaguanine synthase (230 aa).

Residue leucine 8–threonine 18 coordinates ATP. 4 residues coordinate Zn(2+): cysteine 186, cysteine 196, cysteine 199, and cysteine 202.

Belongs to the QueC family. Requires Zn(2+) as cofactor.

It carries out the reaction 7-carboxy-7-deazaguanine + NH4(+) + ATP = 7-cyano-7-deazaguanine + ADP + phosphate + H2O + H(+). It functions in the pathway purine metabolism; 7-cyano-7-deazaguanine biosynthesis. In terms of biological role, catalyzes the ATP-dependent conversion of 7-carboxy-7-deazaguanine (CDG) to 7-cyano-7-deazaguanine (preQ(0)). This is 7-cyano-7-deazaguanine synthase from Xylella fastidiosa (strain 9a5c).